A 45-amino-acid chain; its full sequence is Putative purine permease 9 (45 aa).

Not detected in seedlings, leaves, embryos or root and shoot meristems.

The protein is Putative purine permease 9 of Arabidopsis thaliana (Mouse-ear cress).